Consider the following 53-residue polypeptide: uncharacterized protein (53 aa).

A helical membrane pass occupies residues 26 to 46; it reads CYLLFCFLECFLNLFKKCGVF.

The protein belongs to the plectrovirus ORF11 family.

The protein resides in the host membrane. This is an uncharacterized protein from Spiroplasma virus SpV1-R8A2 B (SpV1).